A 160-amino-acid polypeptide reads, in one-letter code: CXXC motif containing zinc binding protein (160 aa).

4 residues coordinate Zn(2+): Cys-33, Cys-36, Cys-67, and Cys-70. Ser-75 bears the Phosphoserine mark.

Belongs to the UPF0587 family. Monomer.

The chain is CXXC motif containing zinc binding protein from Rattus norvegicus (Rat).